We begin with the raw amino-acid sequence, 235 residues long: 2-C-methyl-D-erythritol 4-phosphate cytidylyltransferase (235 aa).

It belongs to the IspD/TarI cytidylyltransferase family. IspD subfamily.

It catalyses the reaction 2-C-methyl-D-erythritol 4-phosphate + CTP + H(+) = 4-CDP-2-C-methyl-D-erythritol + diphosphate. It functions in the pathway isoprenoid biosynthesis; isopentenyl diphosphate biosynthesis via DXP pathway; isopentenyl diphosphate from 1-deoxy-D-xylulose 5-phosphate: step 2/6. In terms of biological role, catalyzes the formation of 4-diphosphocytidyl-2-C-methyl-D-erythritol from CTP and 2-C-methyl-D-erythritol 4-phosphate (MEP). The chain is 2-C-methyl-D-erythritol 4-phosphate cytidylyltransferase from Pseudomonas putida (strain ATCC 700007 / DSM 6899 / JCM 31910 / BCRC 17059 / LMG 24140 / F1).